The chain runs to 46 residues: Large ribosomal subunit protein bL34c (46 aa).

Residues 1–46 (MSKRTLEGSHRKKVRKSGFLSRSQSPTGRRILKARRKKGRKMLVKY) form a disordered region. Basic residues predominate over residues 30–46 (RILKARRKKGRKMLVKY).

The protein belongs to the bacterial ribosomal protein bL34 family.

It is found in the plastid. The protein localises to the cyanelle. The chain is Large ribosomal subunit protein bL34c (rpl34) from Cyanophora paradoxa.